A 533-amino-acid chain; its full sequence is Probable nucleolar protein 5-2 (533 aa).

The 119-residue stretch at 281-399 folds into the Nop domain; sequence IAPNLTALVG…LEARLRNLEG (119 aa). 2 disordered regions span residues 401–433 and 445–533; these read DLGRLSGSSKGKPKIEVYNKDKKMGSGGLITPA and GETS…KSKD. A compositionally biased stretch (basic and acidic residues) spans 413-424; that stretch reads PKIEVYNKDKKM. Over residues 521 to 533 the composition is skewed to basic residues; the sequence is KKDKKEKKKKSKD.

The protein belongs to the NOP5/NOP56 family.

Its subcellular location is the nucleus. It localises to the nucleolus. Functionally, required for 60S ribosomal subunit biogenesis. This chain is Probable nucleolar protein 5-2 (NOP5-2), found in Arabidopsis thaliana (Mouse-ear cress).